Here is a 435-residue protein sequence, read N- to C-terminus: E3 ubiquitin-protein ligase PUB22 (435 aa).

Residues 6–81 (EIPSFFLCPI…QSWCTLNASY (76 aa)) enclose the U-box domain.

As to quaternary structure, interacts with RPN12A. Binds to EXO70B2. In terms of processing, auto-ubiquitinated leading to degradation via the 26S proteasome. This Auto-ubiquitination is repressed by the bacterial elicitor flg22 thus leading to a transiently increased protein stabilization and accumulation.

It localises to the cytoplasm. The enzyme catalyses S-ubiquitinyl-[E2 ubiquitin-conjugating enzyme]-L-cysteine + [acceptor protein]-L-lysine = [E2 ubiquitin-conjugating enzyme]-L-cysteine + N(6)-ubiquitinyl-[acceptor protein]-L-lysine.. It participates in protein modification; protein ubiquitination. E3 ubiquitin-protein ligase that negatively regulates water stress response. May control in coordination with PUB23 a drought signaling pathway by ubiquitinating cytosolic RPN12a. Acts as a negative regulator of the immunity triggered by the pathogen-associated molecular patterns (PAMPs), in association with PUB23 and PUB24. Regulates EXO70B2 ubiquitination and degradation via the 26S proteasome to attenuate PAMP-induced signaling. The chain is E3 ubiquitin-protein ligase PUB22 from Arabidopsis thaliana (Mouse-ear cress).